Reading from the N-terminus, the 318-residue chain is 2-keto-3-deoxygluconate permease (318 aa).

The next 10 helical transmembrane spans lie at 10–30, 42–62, 76–96, 105–125, 139–159, 162–182, 199–219, 224–244, 254–274, and 289–309; these read IPGGLMLVPLFLGAFCNTFTP, GLITGTIPILAVWFFCMGASI, VLVVTKLATAWVVAMIAGAFL, LLAGISVLALVAAMDMTNGGL, AGAFVLMSLESGPLMTMVILG, GIATFEPQLFVGAVLPFLIGF, VQTLIPFFAFALGNTINLSVI, FAGIFLGVLVIIVTGIPLILA, TAGIAASSSAGAAVATPLLIA, and ALVATSVIVTSVLVPIITALW.

Belongs to the KdgT transporter family.

It is found in the cell inner membrane. It carries out the reaction 2-dehydro-3-deoxy-D-gluconate(in) + H(+)(in) = 2-dehydro-3-deoxy-D-gluconate(out) + H(+)(out). Functionally, catalyzes the proton-dependent uptake of 2-keto-3-deoxygluconate (KDG) into the cell. In Pectobacterium atrosepticum (strain SCRI 1043 / ATCC BAA-672) (Erwinia carotovora subsp. atroseptica), this protein is 2-keto-3-deoxygluconate permease.